The primary structure comprises 505 residues: Probable alpha-L-arabinofuranosidase C (505 aa).

N-linked (GlcNAc...) asparagine glycosylation is found at asparagine 152, asparagine 269, and asparagine 438.

It belongs to the glycosyl hydrolase 51 family.

Its subcellular location is the secreted. It catalyses the reaction Hydrolysis of terminal non-reducing alpha-L-arabinofuranoside residues in alpha-L-arabinosides.. It functions in the pathway glycan metabolism; L-arabinan degradation. Its function is as follows. Alpha-L-arabinofuranosidase involved in the degradation of arabinoxylan, a major component of plant hemicellulose. Acts only on small linear 1,5-alpha-linked L-arabinofuranosyl oligosaccharides. This is Probable alpha-L-arabinofuranosidase C (abfC) from Aspergillus clavatus (strain ATCC 1007 / CBS 513.65 / DSM 816 / NCTC 3887 / NRRL 1 / QM 1276 / 107).